A 22-amino-acid polypeptide reads, in one-letter code: Cysteine proteinase (22 aa).

Positions 1 to 22 are disordered; it reads GADDSDWRKKGAVNVIXKDQGQ.

The protein belongs to the peptidase C1 family.

The protein is Cysteine proteinase of Trichomonas vaginalis.